The chain runs to 222 residues: Ribosomal RNA large subunit methyltransferase E (222 aa).

Positions 64, 66, 92, 108, and 133 each coordinate S-adenosyl-L-methionine. Catalysis depends on K173, which acts as the Proton acceptor.

Belongs to the class I-like SAM-binding methyltransferase superfamily. RNA methyltransferase RlmE family.

It is found in the cytoplasm. It catalyses the reaction uridine(2552) in 23S rRNA + S-adenosyl-L-methionine = 2'-O-methyluridine(2552) in 23S rRNA + S-adenosyl-L-homocysteine + H(+). Specifically methylates the uridine in position 2552 of 23S rRNA at the 2'-O position of the ribose in the fully assembled 50S ribosomal subunit. This Variovorax paradoxus (strain S110) protein is Ribosomal RNA large subunit methyltransferase E.